The chain runs to 412 residues: Argininosuccinate synthase (412 aa).

Residues 11–19 (AYSGGLDTS) and alanine 37 contribute to the ATP site. L-citrulline-binding residues include tyrosine 88 and serine 93. 116-124 (SHGATGKGN) contributes to the ATP binding site. Residues threonine 120, asparagine 124, and aspartate 125 each coordinate L-aspartate. Asparagine 124 contributes to the L-citrulline binding site. Residues arginine 128, serine 181, serine 190, glutamate 271, and tyrosine 283 each contribute to the L-citrulline site.

Belongs to the argininosuccinate synthase family. In terms of assembly, homotetramer.

The protein resides in the cytoplasm. The protein localises to the cytosol. It carries out the reaction L-citrulline + L-aspartate + ATP = 2-(N(omega)-L-arginino)succinate + AMP + diphosphate + H(+). Its pathway is amino-acid biosynthesis; L-arginine biosynthesis; L-arginine from L-ornithine and carbamoyl phosphate: step 2/3. It participates in nitrogen metabolism; urea cycle; (N(omega)-L-arginino)succinate from L-aspartate and L-citrulline: step 1/1. Functionally, one of the enzymes of the urea cycle, the metabolic pathway transforming neurotoxic amonia produced by protein catabolism into inocuous urea in the liver of ureotelic animals. Catalyzes the formation of arginosuccinate from aspartate, citrulline and ATP and together with ASL it is responsible for the biosynthesis of arginine in most body tissues. The chain is Argininosuccinate synthase from Xenopus tropicalis (Western clawed frog).